Reading from the N-terminus, the 1668-residue chain is Chitin synthase chs-2 (1668 aa).

Residues 1-19 (MMNTLDHRPLGRMETMEGK) show a composition bias toward basic and acidic residues. A disordered region spans residues 1 to 51 (MMNTLDHRPLGRMETMEGKPDEDEVPTSSNSDAKGKGYYYSSGTVPTDDST). Over 1 to 116 (MMNTLDHRPL…HGFWHDASLQ (116 aa)) the chain is Cytoplasmic. A helical transmembrane segment spans residues 117–137 (VLKLATFLVLFLLTLGSAVVA). Residues 138 to 176 (KSTFILMTSAIGWGGQTITICNQVISEATQNTVKLKNAH) lie on the Extracellular side of the membrane. The helical transmembrane segment at 177 to 197 (VVKWVWATLLALSAPEALCFV) threads the bilayer. Residues 198–212 (RSMHRTMFRNVKRPT) lie on the Cytoplasmic side of the membrane. The chain crosses the membrane as a helical span at residues 213 to 233 (FIQFVFVLIIETFHSIGVGIL). Over 234 to 242 (VFRIFPDLD) the chain is Extracellular. A helical transmembrane segment spans residues 243–263 (AVTAAQLTNAMCFVPAILSVI). The Cytoplasmic portion of the chain corresponds to 264-271 (SRKPNKSA). The helical transmembrane segment at 272-292 (LLLVIIDFAAIAAQSSGFWAL) threads the bilayer. The Extracellular portion of the chain corresponds to 293–301 (PMFLPNLQK). The helical transmembrane segment at 302-322 (HLVAIPVSLTLISLAWWQNFV) threads the bilayer. Residues 323–347 (HRDSVFPPVRTLAKFAQRLSERRSK) lie on the Cytoplasmic side of the membrane. Residues 348–368 (TYAFVSLWKICIYVVCCFLFI) form a helical membrane-spanning segment. The Extracellular portion of the chain corresponds to 369–487 (SSRMKIEDML…IYSNYVERNQ (119 aa)). An N-linked (GlcNAc...) asparagine glycan is attached at Asn396. The helical transmembrane segment at 488–508 (LTMAYDALWLVIFQFGAVFVC) threads the bilayer. The Cytoplasmic portion of the chain corresponds to 509–522 (YHSSKFACKVMMQR). A helical membrane pass occupies residues 523–543 (MGFALPMALSVPVTVLLLSTN). Over 544–576 (CRMRQKDSCYGTNVLTVELFWQCNGASMSLADF) the chain is Extracellular. A helical transmembrane segment spans residues 577-597 (ILTPQTWIWLCWLASQFWITI). The Cytoplasmic segment spans residues 598–1045 (HLWNPKHERL…ISIWYIIYQL (448 aa)). A helical transmembrane segment spans residues 1046–1066 (VMLISSILGPGTIFVMIIGAI). At 1067–1074 (SISFSIDT) the chain is on the extracellular side. The helical transmembrane segment at 1075–1095 (LISLVIVSIPVVVFIVVCLTA) threads the bilayer. Residues 1096 to 1100 (KPEHQ) lie on the Cytoplasmic side of the membrane. The chain crosses the membrane as a helical span at residues 1101 to 1121 (LICAQTIGAIFAMLMTAVVVG). Residues 1122-1136 (TSLQLQKDGLLSPHS) lie on the Extracellular side of the membrane. A helical membrane pass occupies residues 1137-1157 (MFTVAVATSFLTAAILHPLEF). A topological domain (cytoplasmic) is located at residue Thr1158. The helical transmembrane segment at 1159 to 1179 (CIIPGTIYFLAIPCMYMLLPI) threads the bilayer. Topologically, residues 1180-1375 (YSVCNMHTVS…RAGLIAIRNS (196 aa)) are extracellular. The tract at residues 1192–1216 (TREDPRPTEKNTLAKKTPGNLESGD) is disordered. Positions 1280-1335 (QIDKCSEADEDEQAEIEDALEMSNQSHAAKKNQKWKQAQSEAWLADKALKRAEREY) form a coiled coil. Residue Asn1303 is glycosylated (N-linked (GlcNAc...) asparagine). Residues 1376–1396 (HTVYFLMINIVFIISVLVLQI) form a helical membrane-spanning segment. The Cytoplasmic portion of the chain corresponds to 1397-1440 (HKDCLNIEWPLGPKFNHTVRPCYANHDDNQKEEVWVMTRLQLEP). Residues 1441–1461 (IGLVFLIFFVSILVIQFLAML) traverse the membrane as a helical segment. At 1462–1668 (CHRFGTLAHI…SSGDVELRRF (207 aa)) the chain is on the extracellular side. Residues 1625–1668 (RLFTAQQDQNSPTSDGNRRKSNSRPWDQPTSSATSSGDVELRRF) are disordered. 2 stretches are compositionally biased toward polar residues: residues 1628-1639 (TAQQDQNSPTSD) and 1647-1661 (SRPW…TSSG).

Belongs to the chitin synthase family. Class IV subfamily.

Its subcellular location is the cell membrane. It catalyses the reaction [(1-&gt;4)-N-acetyl-beta-D-glucosaminyl](n) + UDP-N-acetyl-alpha-D-glucosamine = [(1-&gt;4)-N-acetyl-beta-D-glucosaminyl](n+1) + UDP + H(+). Functionally, may be involved in chitin synthesis in the pharynx during larval development. The sequence is that of Chitin synthase chs-2 from Caenorhabditis elegans.